The chain runs to 214 residues: Adenylate kinase (214 aa).

10-15 (GAGKGT) contributes to the ATP binding site. The segment at 30-59 (STGDMLRAAIKAGTELGLEAKRVMDEGKLV) is NMP. AMP contacts are provided by residues Thr-31, Arg-36, 57-59 (KLV), 85-88 (GFPR), and Gln-92. Residues 122 to 159 (GRRVHPASGRVYHVVYNPPKVEGKDNETGDDLIVRDDD) form an LID region. ATP-binding positions include Arg-123 and 132-133 (VY). AMP-binding residues include Arg-156 and Arg-167. Position 200 (Arg-200) interacts with ATP.

It belongs to the adenylate kinase family. As to quaternary structure, monomer.

The protein localises to the cytoplasm. It carries out the reaction AMP + ATP = 2 ADP. It functions in the pathway purine metabolism; AMP biosynthesis via salvage pathway; AMP from ADP: step 1/1. Functionally, catalyzes the reversible transfer of the terminal phosphate group between ATP and AMP. Plays an important role in cellular energy homeostasis and in adenine nucleotide metabolism. This chain is Adenylate kinase, found in Alteromonas mediterranea (strain DSM 17117 / CIP 110805 / LMG 28347 / Deep ecotype).